Reading from the N-terminus, the 149-residue chain is Transcriptional regulator MraZ (149 aa).

2 consecutive SpoVT-AbrB domains span residues 7–54 and 83–126; these read KYVN…GISH and AVQL…QPQN.

Belongs to the MraZ family. As to quaternary structure, forms oligomers.

The protein resides in the cytoplasm. Its subcellular location is the nucleoid. This Rickettsia akari (strain Hartford) protein is Transcriptional regulator MraZ.